The sequence spans 450 residues: Thiamine biosynthesis regulatory protein (450 aa).

The span at 1–12 shows a compositional bias: basic residues; sequence MVNSKRQQRSKK. Residues 1–23 form a disordered region; that stretch reads MVNSKRQQRSKKVASSSKVPPTK. Low complexity predominate over residues 13–23; it reads VASSSKVPPTK. Positions 30 to 57 form a DNA-binding region, zn(2)-C6 fungal-type; the sequence is CWACRFKKRRCDENRPICSLCAKHGDNC. The segment at 210-234 is disordered; it reads TDQLPSPGHSMSSAEETTTAALSSP.

It is found in the nucleus. Functionally, positive regulator of thiamine biosynthesis. The sequence is that of Thiamine biosynthesis regulatory protein (THI2) from Saccharomyces cerevisiae (strain ATCC 204508 / S288c) (Baker's yeast).